The primary structure comprises 116 residues: uncharacterized protein (116 aa).

An N-terminal signal peptide occupies residues 1 to 21 (MAPSTAMLIMGLLKLPRLRLA).

This is an uncharacterized protein from Saccharomyces cerevisiae (strain ATCC 204508 / S288c) (Baker's yeast).